The chain runs to 436 residues: Histidine--tRNA ligase 1 (436 aa).

It belongs to the class-II aminoacyl-tRNA synthetase family. As to quaternary structure, homodimer.

It is found in the cytoplasm. It carries out the reaction tRNA(His) + L-histidine + ATP = L-histidyl-tRNA(His) + AMP + diphosphate + H(+). This chain is Histidine--tRNA ligase 1, found in Bacillus cereus (strain ATCC 10987 / NRS 248).